A 574-amino-acid polypeptide reads, in one-letter code: Glutamyl-tRNA(Gln) amidotransferase subunit B, mitochondrial (574 aa).

The protein belongs to the GatB/GatE family. GatB subfamily. As to quaternary structure, subunit of the heterotrimeric GatCAB amidotransferase (AdT) complex, composed of A, B and C subunits.

The protein localises to the mitochondrion. It catalyses the reaction L-glutamyl-tRNA(Gln) + L-glutamine + ATP + H2O = L-glutaminyl-tRNA(Gln) + L-glutamate + ADP + phosphate + H(+). Allows the formation of correctly charged Gln-tRNA(Gln) through the transamidation of misacylated Glu-tRNA(Gln) in the mitochondria. The reaction takes place in the presence of glutamine and ATP through an activated gamma-phospho-Glu-tRNA(Gln). The protein is Glutamyl-tRNA(Gln) amidotransferase subunit B, mitochondrial of Phytophthora infestans (strain T30-4) (Potato late blight agent).